Here is a 406-residue protein sequence, read N- to C-terminus: Serine hydroxymethyltransferase (406 aa).

(6S)-5,6,7,8-tetrahydrofolate-binding positions include leucine 111 and 115-117 (GHL). The residue at position 220 (lysine 220) is an N6-(pyridoxal phosphate)lysine. 340 to 342 (SAF) contacts (6S)-5,6,7,8-tetrahydrofolate.

This sequence belongs to the SHMT family. Homodimer. The cofactor is pyridoxal 5'-phosphate.

It is found in the cytoplasm. The catalysed reaction is (6R)-5,10-methylene-5,6,7,8-tetrahydrofolate + glycine + H2O = (6S)-5,6,7,8-tetrahydrofolate + L-serine. The protein operates within one-carbon metabolism; tetrahydrofolate interconversion. It participates in amino-acid biosynthesis; glycine biosynthesis; glycine from L-serine: step 1/1. Its function is as follows. Catalyzes the reversible interconversion of serine and glycine with tetrahydrofolate (THF) serving as the one-carbon carrier. This reaction serves as the major source of one-carbon groups required for the biosynthesis of purines, thymidylate, methionine, and other important biomolecules. Also exhibits THF-independent aldolase activity toward beta-hydroxyamino acids, producing glycine and aldehydes, via a retro-aldol mechanism. The protein is Serine hydroxymethyltransferase of Mycoplasma genitalium (strain ATCC 33530 / DSM 19775 / NCTC 10195 / G37) (Mycoplasmoides genitalium).